We begin with the raw amino-acid sequence, 767 residues long: Photosystem I P700 chlorophyll a apoprotein A1 (767 aa).

The next 8 membrane-spanning stretches (helical) occupy residues 72 to 95 (IFSA…FHGA), 158 to 181 (LMSL…FHYH), 197 to 221 (LNHH…HVSL), 305 to 323 (IAHH…GHMY), 364 to 387 (WHAQ…QHMY), 403 to 429 (IGLF…IAMI), 451 to 473 (ALIS…LYIH), and 548 to 566 (FMVH…LILL). [4Fe-4S] cluster is bound by residues Cys-590 and Cys-599. 2 consecutive transmembrane segments (helical) span residues 606–627 (HVFL…HFSW) and 681–703 (TSAY…MFLF). His-692 contributes to the chlorophyll a' binding site. Chlorophyll a-binding residues include Met-700 and Tyr-708. Trp-709 lines the phylloquinone pocket. A helical membrane pass occupies residues 741–761 (AVGVAHYLLGGIATTWAFFHA).

The protein belongs to the PsaA/PsaB family. As to quaternary structure, the PsaA/B heterodimer binds the P700 chlorophyll special pair and subsequent electron acceptors. PSI consists of a core antenna complex that captures photons, and an electron transfer chain that converts photonic excitation into a charge separation. The cyanobacterial PSI reaction center is composed of one copy each of PsaA,B,C,D,E,F,I,J,K,L,M and X, and forms trimeric complexes. It depends on PSI electron transfer chain: 5 chlorophyll a, 1 chlorophyll a', 2 phylloquinones and 3 4Fe-4S clusters. PSI core antenna: 90 chlorophyll a, 22 carotenoids, 3 phospholipids and 1 galactolipid. P700 is a chlorophyll a/chlorophyll a' dimer, A0 is one or more chlorophyll a, A1 is one or both phylloquinones and FX is a shared 4Fe-4S iron-sulfur center. as a cofactor.

It is found in the cellular thylakoid membrane. It carries out the reaction reduced [plastocyanin] + hnu + oxidized [2Fe-2S]-[ferredoxin] = oxidized [plastocyanin] + reduced [2Fe-2S]-[ferredoxin]. Functionally, psaA and PsaB bind P700, the primary electron donor of photosystem I (PSI), as well as the electron acceptors A0, A1 and FX. PSI is a plastocyanin/cytochrome c6-ferredoxin oxidoreductase, converting photonic excitation into a charge separation, which transfers an electron from the donor P700 chlorophyll pair to the spectroscopically characterized acceptors A0, A1, FX, FA and FB in turn. Oxidized P700 is reduced on the lumenal side of the thylakoid membrane by plastocyanin or cytochrome c6. In Synechococcus sp. (strain WH7803), this protein is Photosystem I P700 chlorophyll a apoprotein A1.